Reading from the N-terminus, the 185-residue chain is Elongation factor P (185 aa).

This sequence belongs to the elongation factor P family.

It is found in the cytoplasm. The protein operates within protein biosynthesis; polypeptide chain elongation. Functionally, involved in peptide bond synthesis. Stimulates efficient translation and peptide-bond synthesis on native or reconstituted 70S ribosomes in vitro. Probably functions indirectly by altering the affinity of the ribosome for aminoacyl-tRNA, thus increasing their reactivity as acceptors for peptidyl transferase. This Microcystis aeruginosa (strain NIES-843 / IAM M-2473) protein is Elongation factor P.